A 962-amino-acid chain; its full sequence is Phagocyte signaling-impaired protein (962 aa).

TPR repeat units follow at residues 45 to 78 (LCAR…KPTD), 79 to 112 (DSTL…NPGN), and 523 to 560 (QIQL…FTNS). Residues 856–880 (TKVKKKQGDNKTQDTPQPVSEKERS) form a disordered region.

Belongs to the MDM20/NAA25 family. Component of the N-terminal acetyltransferase B (NatB) complex.

The protein localises to the lysosome. Its function is as follows. Non-catalytic subunit of the NatB complex which catalyzes acetylation of the N-terminal methionine residues of proteins beginning with Met-Asp or Met-Glu. Has 2 roles in the larval immune response: required both for the phagocytic degradation of internalized bacteria and for the induction of Defensin in the fat body. Within the phagocytic blood cells, has a role in detection of infection and activation of the humoral immune response. The polypeptide is Phagocyte signaling-impaired protein (Drosophila pseudoobscura pseudoobscura (Fruit fly)).